Reading from the N-terminus, the 562-residue chain is Oxygen-dependent choline dehydrogenase (562 aa).

Position 4 to 33 (4 to 33 (DYIIIGAGSAGNVLATRLTEDPNTTVLLLE)) interacts with FAD. The active-site Proton acceptor is H473.

It belongs to the GMC oxidoreductase family. FAD is required as a cofactor.

It catalyses the reaction choline + A = betaine aldehyde + AH2. The enzyme catalyses betaine aldehyde + NAD(+) + H2O = glycine betaine + NADH + 2 H(+). The protein operates within amine and polyamine biosynthesis; betaine biosynthesis via choline pathway; betaine aldehyde from choline (cytochrome c reductase route): step 1/1. Its function is as follows. Involved in the biosynthesis of the osmoprotectant glycine betaine. Catalyzes the oxidation of choline to betaine aldehyde and betaine aldehyde to glycine betaine at the same rate. The protein is Oxygen-dependent choline dehydrogenase of Escherichia coli O45:K1 (strain S88 / ExPEC).